Here is a 193-residue protein sequence, read N- to C-terminus: uncharacterized protein (193 aa).

The signal sequence occupies residues 1 to 14 (MSTSLLFSLSPSSS).

This is an uncharacterized protein from Saccharomyces cerevisiae (strain ATCC 204508 / S288c) (Baker's yeast).